The primary structure comprises 198 residues: Holliday junction branch migration complex subunit RuvA (198 aa).

Positions 1-63 are domain I; sequence MYDYIKGQLT…EDAHLLFGFH (63 aa). A domain II region spans residues 64–142; it reads TEDEKDVFLK…EAPQETGNTK (79 aa). A flexible linker region spans residues 143–147; sequence ARSNK. The domain III stretch occupies residues 148 to 198; sequence AGNTQLDEAIEALLALGYKATELKKIRAFFEGTSETAEQYIKSALKLLMKG.

The protein belongs to the RuvA family. As to quaternary structure, homotetramer. Forms an RuvA(8)-RuvB(12)-Holliday junction (HJ) complex. HJ DNA is sandwiched between 2 RuvA tetramers; dsDNA enters through RuvA and exits via RuvB. An RuvB hexamer assembles on each DNA strand where it exits the tetramer. Each RuvB hexamer is contacted by two RuvA subunits (via domain III) on 2 adjacent RuvB subunits; this complex drives branch migration. In the full resolvosome a probable DNA-RuvA(4)-RuvB(12)-RuvC(2) complex forms which resolves the HJ.

It is found in the cytoplasm. The RuvA-RuvB-RuvC complex processes Holliday junction (HJ) DNA during genetic recombination and DNA repair, while the RuvA-RuvB complex plays an important role in the rescue of blocked DNA replication forks via replication fork reversal (RFR). RuvA specifically binds to HJ cruciform DNA, conferring on it an open structure. The RuvB hexamer acts as an ATP-dependent pump, pulling dsDNA into and through the RuvAB complex. HJ branch migration allows RuvC to scan DNA until it finds its consensus sequence, where it cleaves and resolves the cruciform DNA. The sequence is that of Holliday junction branch migration complex subunit RuvA from Streptococcus pyogenes serotype M12 (strain MGAS2096).